Reading from the N-terminus, the 386-residue chain is 2-isopropylmalate synthase (386 aa).

In terms of domain architecture, Pyruvate carboxyltransferase spans 15–269 (IRIFDTTLRD…ETNVKTWKLY (255 aa)). Residues D24, H207, H209, and N243 each contribute to the a divalent metal cation site.

The protein belongs to the alpha-IPM synthase/homocitrate synthase family. As to quaternary structure, homodimer. A divalent metal cation is required as a cofactor.

It carries out the reaction 3-methyl-2-oxobutanoate + acetyl-CoA + H2O = (2S)-2-isopropylmalate + CoA + H(+). It functions in the pathway amino-acid biosynthesis; L-leucine biosynthesis; L-leucine from 3-methyl-2-oxobutanoate: step 1/4. Catalyzes the condensation of the acetyl group of acetyl-CoA with 3-methyl-2-oxobutanoate (2-oxoisovalerate) to form 3-carboxy-3-hydroxy-4-methylpentanoate (2-isopropylmalate). Carries out the first step of the leucine biosynthesis pathway. The protein is 2-isopropylmalate synthase (leuA) of Saccharolobus solfataricus (strain ATCC 35092 / DSM 1617 / JCM 11322 / P2) (Sulfolobus solfataricus).